Here is a 369-residue protein sequence, read N- to C-terminus: S-(hydroxymethyl)glutathione dehydrogenase (369 aa).

Zn(2+)-binding residues include Cys-40, His-62, Cys-92, Cys-95, Cys-98, Cys-106, and Cys-169.

The protein belongs to the zinc-containing alcohol dehydrogenase family. Class-III subfamily. As to quaternary structure, homodimer. Requires Zn(2+) as cofactor.

Its subcellular location is the cytoplasm. The enzyme catalyses S-(hydroxymethyl)glutathione + NADP(+) = S-formylglutathione + NADPH + H(+). It catalyses the reaction S-(hydroxymethyl)glutathione + NAD(+) = S-formylglutathione + NADH + H(+). The catalysed reaction is a primary alcohol + NAD(+) = an aldehyde + NADH + H(+). It carries out the reaction a secondary alcohol + NAD(+) = a ketone + NADH + H(+). The enzyme catalyses S-nitrosoglutathione + NADH + H(+) = S-(hydroxysulfenamide)glutathione + NAD(+). Has high formaldehyde dehydrogenase activity in the presence of glutathione and catalyzes the oxidation of normal alcohols in a reaction that is not GSH-dependent. In addition, hemithiolacetals other than those formed from GSH, including omega-thiol fatty acids, also are substrates. Also acts as a S-nitroso-glutathione reductase by catalyzing the NADH-dependent reduction of S-nitrosoglutathione. The chain is S-(hydroxymethyl)glutathione dehydrogenase (frmA) from Escherichia coli (strain ATCC 8739 / DSM 1576 / NBRC 3972 / NCIMB 8545 / WDCM 00012 / Crooks).